The primary structure comprises 128 residues: Mini-ribonuclease 3 (128 aa).

Asp17 is an active-site residue.

Belongs to the MrnC RNase family. As to quaternary structure, homodimer. It depends on Mg(2+) as a cofactor.

The protein localises to the cytoplasm. Functionally, involved in correct processing of both the 5' and 3' ends of 23S rRNA precursor. Processes 30S rRNA precursor transcript even in absence of ribonuclease 3 (Rnc); Rnc processes 30S rRNA into smaller rRNA precursors. This Streptococcus pneumoniae (strain ATCC BAA-255 / R6) protein is Mini-ribonuclease 3.